A 222-amino-acid chain; its full sequence is Ribosomal RNA large subunit methyltransferase E (222 aa).

Basic and acidic residues predominate over residues 1–13 (MSRSDKNPHERLK). A disordered region spans residues 1–22 (MSRSDKNPHERLKTAKKRTASS). The S-adenosyl-L-methionine site is built by Gly-75, Trp-77, Asp-94, Asp-110, and Asp-134. Lys-174 acts as the Proton acceptor in catalysis.

Belongs to the class I-like SAM-binding methyltransferase superfamily. RNA methyltransferase RlmE family.

It is found in the cytoplasm. The catalysed reaction is uridine(2552) in 23S rRNA + S-adenosyl-L-methionine = 2'-O-methyluridine(2552) in 23S rRNA + S-adenosyl-L-homocysteine + H(+). Specifically methylates the uridine in position 2552 of 23S rRNA at the 2'-O position of the ribose in the fully assembled 50S ribosomal subunit. In Novosphingobium aromaticivorans (strain ATCC 700278 / DSM 12444 / CCUG 56034 / CIP 105152 / NBRC 16084 / F199), this protein is Ribosomal RNA large subunit methyltransferase E.